Consider the following 344-residue polypeptide: Heme A synthase (344 aa).

Transmembrane regions (helical) follow at residues 20–40, 104–124, 135–155, 170–190, 205–225, 233–253, 265–285, 296–316, and 317–337; these read IAWWLIGVAALVFIMVVVGGL, RFLGRLIGLAFFVPFVFFVVT, LIFLFVLGGMQGVLGWWMVMS, AHLGLATLIFGALIWTALDLL, AAAILALIFLQTILGAFVAGI, TWPLMAGAFIPDGLFAMTPVW, FQHRMTAYLLLLCVVWHWWAA, WLAVATFAQACIGIWTVLWVV, and PIPLGAAHQAGAMVVFGVAVW. H267 is a heme binding site. Position 324 (H324) interacts with heme.

The protein belongs to the COX15/CtaA family. Type 2 subfamily. Interacts with CtaB. It depends on heme b as a cofactor.

Its subcellular location is the cell membrane. The enzyme catalyses Fe(II)-heme o + 2 A + H2O = Fe(II)-heme a + 2 AH2. It participates in porphyrin-containing compound metabolism; heme A biosynthesis; heme A from heme O: step 1/1. Functionally, catalyzes the conversion of heme O to heme A by two successive hydroxylations of the methyl group at C8. The first hydroxylation forms heme I, the second hydroxylation results in an unstable dihydroxymethyl group, which spontaneously dehydrates, resulting in the formyl group of heme A. This Parvibaculum lavamentivorans (strain DS-1 / DSM 13023 / NCIMB 13966) protein is Heme A synthase.